Consider the following 136-residue polypeptide: Large ribosomal subunit protein uL16 (136 aa).

It belongs to the universal ribosomal protein uL16 family. Part of the 50S ribosomal subunit.

Functionally, binds 23S rRNA and is also seen to make contacts with the A and possibly P site tRNAs. This chain is Large ribosomal subunit protein uL16, found in Pectobacterium atrosepticum (strain SCRI 1043 / ATCC BAA-672) (Erwinia carotovora subsp. atroseptica).